We begin with the raw amino-acid sequence, 1235 residues long: MNTKWTETQKSAIFTPNCNLLVAAGAGTGKTAVLVERILQKVINDSEEVDIDKLLVVTFTNAAASEMKERVGEALSKLLELNCTSKNLQRQLALLNQSNIMTIHSFCLKVIKNNFHRIDLDPNFRICDDTESKLLKQDALLELFEEKYEEENLGFLNLADGYGGKNDSKLQDIVLSLYEFSQGSPWPKRWLQDVLKDFNLGSDFDFGDTKWAKVLMHNVTVELKGCKNKMKNILNTIENIEGLEHYLEPFKSDIESIDKLINITTWDEIRDEFIKLSFNKLPSKRTDPLVKSYKDKARNTRDEVKKKLISIREDIILCTDDIYENFKEVYPLMKSLTFLVMDFYEKYHNKKSERNMIDFNDIEHFCLEILTSKDKNGDIIPSEAALEYREYFEEIFIDEYQDSNEVQEVIMNMISRKNIYANLFMVGDVKQSIYRFRQARPELFLEKYNSYDEKEGSKNRKIKLSENFRSRKEIIDAINYIFKQIMCREVGELDYGEEECLKSSARYEPFEGNCGGDVELHVVDKKENENKLEDENEEELLDAISVEARLVASKINELVNPSLDQYSFKVYDKEIDNYRSIMYKDIVILMRATQNWAPAFVEELNNSGIPVFADTSVGYFQAIEIKTIISLLQIIDNPLQDIPFIALLRSPIGGFSPEDLIDLRVVNREISFYEILKAIKEHSLELKYSLEHIDERLEYKVEQFFNKLCLWRRKVIHMPIDEFIWHIYIETGYYGFVGAMPGGIQRQANLRMLFERAKQYKNISYKGLFNFINFINKLKSSSTDMGNAKILGENENVVRIMSIHKSKGLEFPVIILSGAGKRFNLTDINKSVLFHKELGLGPEYVNSERHISYPTIVKQVLKRKLKMETLSEEMRILYVAFTRAKEKLIITGTVDNIENTFQRWCEAAYCEEDKLPEYSLINSRNFLDWIGPAVARHPCGEIIRKVCPFEYNLNLITGDDSKWKVFVYSKDNFKSTLDENIDEDIIGKIKSLELDNNKEIYKNEVYRRLNWTYKYEQSSKIAAKFSVSELKRRFKLIDTENGIEFMEPIYLKKPAFLRESKGLTPSERGIVMHLVMQHIDIDKVGSYEQIKEQVDKLVFREFITEAEAKSISVYKIIKFFNSEIGIRMKKSNNVYREVPFYMEIESTELYKQLPQHIYRDEKVLIQGIIDCYFEENNELILVDYKTDHVGDIDSIKEKYQVQIYYYGRALEKLTGKKVKKKYLYLFSKDYILDLS.

The UvrD-like helicase ATP-binding domain occupies 3–471; it reads TKWTETQKSA…IKLSENFRSR (469 aa). Position 24 to 31 (24 to 31) interacts with ATP; that stretch reads AGAGTGKT. Positions 509–808 constitute a UvrD-like helicase C-terminal domain; it reads PFEGNCGGDV…RIMSIHKSKG (300 aa).

It belongs to the helicase family. AddA subfamily. Heterodimer of AddA and AddB/RexB. Mg(2+) serves as cofactor.

It catalyses the reaction Couples ATP hydrolysis with the unwinding of duplex DNA by translocating in the 3'-5' direction.. The enzyme catalyses ATP + H2O = ADP + phosphate + H(+). Its function is as follows. The heterodimer acts as both an ATP-dependent DNA helicase and an ATP-dependent, dual-direction single-stranded exonuclease. Recognizes the chi site generating a DNA molecule suitable for the initiation of homologous recombination. The AddA nuclease domain is required for chi fragment generation; this subunit has the helicase and 3' -&gt; 5' nuclease activities. This Clostridium kluyveri (strain ATCC 8527 / DSM 555 / NBRC 12016 / NCIMB 10680 / K1) protein is ATP-dependent helicase/nuclease subunit A.